The following is a 358-amino-acid chain: 3-isopropylmalate dehydrogenase (358 aa).

76-89 is a binding site for NAD(+); it reads GPRWDNLTGAERPE. The substrate site is built by Arg96, Arg106, Arg135, and Asp225. The Mg(2+) site is built by Asp225, Asp249, and Asp253. Residue 283–295 participates in NAD(+) binding; it reads GSAPDIAGQNKAN.

This sequence belongs to the isocitrate and isopropylmalate dehydrogenases family. LeuB type 1 subfamily. Homodimer. Mg(2+) is required as a cofactor. The cofactor is Mn(2+).

The protein resides in the cytoplasm. It catalyses the reaction (2R,3S)-3-isopropylmalate + NAD(+) = 4-methyl-2-oxopentanoate + CO2 + NADH. It participates in amino-acid biosynthesis; L-leucine biosynthesis; L-leucine from 3-methyl-2-oxobutanoate: step 3/4. Catalyzes the oxidation of 3-carboxy-2-hydroxy-4-methylpentanoate (3-isopropylmalate) to 3-carboxy-4-methyl-2-oxopentanoate. The product decarboxylates to 4-methyl-2 oxopentanoate. This chain is 3-isopropylmalate dehydrogenase, found in Oleidesulfovibrio alaskensis (strain ATCC BAA-1058 / DSM 17464 / G20) (Desulfovibrio alaskensis).